The sequence spans 91 residues: Lipolysis-activating peptide 1-alpha chain (91 aa).

The N-terminal stretch at 1-21 (MNIKLFCFLSILISLTGLSLS) is a signal peptide. The region spanning 23–87 (DDGNYPIDAN…FFDAYKTYCK (65 aa)) is the LCN-type CS-alpha/beta domain. 3 cysteine pairs are disulfide-bonded: C38–C61, C47–C66, and C51–C68.

This sequence belongs to the long (3 C-C) scorpion toxin superfamily. In terms of assembly, heterodimer of this alpha chain and a beta chain (AC D9U2A2). In terms of tissue distribution, expressed by the venom gland.

The protein localises to the secreted. Functionally, the heterodimer LVP1 induces lipolysis in rat adipocytes. Induction of lipolysis by LVP1 appears to be mediated through the beta-2 adrenergic receptor pathway (ADRB2). The protein is Lipolysis-activating peptide 1-alpha chain of Lychas mucronatus (Chinese swimming scorpion).